We begin with the raw amino-acid sequence, 293 residues long: MATLKDIRVRIKGVKSTQQVTKAMKMVAAAKLRRAQDRAIMARPYASKLKEMLASLSAKVDTSVNPLFAVRSEVNKVLVILVTSDRGLCGAFNGNIIKLAYKTIHEDYAAQYGKGGVSMICAGTRGYEFFKKRHYTLTKGYPAVFQNLDFAVAKEIADMASNMYLRGEVDRVVVVYNEFKSVLAPQLKSEVLLPITSGDASAKENSGGEYMYEPNPAAIIDVLLPKHLRTQVWRIMLESNAAEQAARMAAMDSATENAKELLRTLNISYNRARQAAITTELSEIVAGAEALNG.

This sequence belongs to the ATPase gamma chain family. As to quaternary structure, F-type ATPases have 2 components, CF(1) - the catalytic core - and CF(0) - the membrane proton channel. CF(1) has five subunits: alpha(3), beta(3), gamma(1), delta(1), epsilon(1). CF(0) has three main subunits: a, b and c.

It localises to the cell inner membrane. Its function is as follows. Produces ATP from ADP in the presence of a proton gradient across the membrane. The gamma chain is believed to be important in regulating ATPase activity and the flow of protons through the CF(0) complex. This Chlorobium chlorochromatii (strain CaD3) protein is ATP synthase gamma chain.